Consider the following 408-residue polypeptide: PCI domain-containing protein 2 (408 aa).

Alanine 2 carries the N-acetylalanine modification. Residue serine 45 is modified to Phosphoserine. The 191-residue stretch at 210–400 folds into the PCI domain; the sequence is VTYRYYVGRK…QKLVVSKQNP (191 aa).

This sequence belongs to the CSN12 family. Component of the nuclear pore complex (NPC)-associated TREX-2 complex (transcription and export complex 2), composed of at least GANP, 2 copies of ENY2, PCID2, SEM1/DSS1, and either centrin CETN2 or centrin CETN3. The TREX-2 complex also associates with ALYREF/ALY and with the nucleoporin NUP153. Interacts with BRCA2. Interacts with SRCAP chromatin remodeling complex component ZNHIT1; the interaction results in inhibition of SRCAP complex activity, preventing the deposition of histone variant H2AZ1/H2A.Z to lymphoid fate regulator genes and restricting lymphoid lineage commitment.

The protein resides in the cytoplasm. It localises to the nucleus. It is found in the nuclear pore complex. Required for B-cell survival through the regulation of the expression of cell-cycle checkpoint MAD2L1 protein during B cell differentiation. As a component of the TREX-2 complex, involved in the export of mRNAs to the cytoplasm through the nuclear pores. Binds and stabilizes BRCA2 and is thus involved in the control of R-loop-associated DNA damage and transcription-associated genomic instability. Blocks the activity of the SRCAP chromatin remodeling complex by interacting with SRCAP complex member ZNHIT1 and inhibiting its interaction with the complex. This prevents the deposition of histone variant H2AZ1/H2A.Z at the nucleosomes of key lymphoid fate regulator genes which suppresses their expression and restricts lymphoid lineage commitment. In Bos taurus (Bovine), this protein is PCI domain-containing protein 2 (PCID2).